The following is a 248-amino-acid chain: tRNA (guanine-N(1)-)-methyltransferase (248 aa).

Residues glycine 114 and 134–139 each bind S-adenosyl-L-methionine; that span reads IGDYVL.

Belongs to the RNA methyltransferase TrmD family. In terms of assembly, homodimer.

The protein resides in the cytoplasm. It catalyses the reaction guanosine(37) in tRNA + S-adenosyl-L-methionine = N(1)-methylguanosine(37) in tRNA + S-adenosyl-L-homocysteine + H(+). Specifically methylates guanosine-37 in various tRNAs. The protein is tRNA (guanine-N(1)-)-methyltransferase of Blochmanniella floridana.